The sequence spans 121 residues: Histone H2B.6 (121 aa).

The interval 1 to 28 (MAPKAEKKPKVEKRVPGKEGETSKKKAK) is disordered. Residues Lys-7 and Lys-13 each carry the N6-acetyllysine modification.

It belongs to the histone H2B family. In terms of assembly, the nucleosome is a histone octamer containing two molecules each of H2A, H2B, H3 and H4 assembled in one H3-H4 heterotetramer and two H2A-H2B heterodimers. The octamer wraps approximately 147 bp of DNA. In terms of processing, can be acetylated to form H2BK6ac and H2BK33ac. Expressed preferentially in meristematic tissues.

The protein localises to the nucleus. Its subcellular location is the chromosome. Its function is as follows. Core component of nucleosome. Nucleosomes wrap and compact DNA into chromatin, limiting DNA accessibility to the cellular machineries which require DNA as a template. Histones thereby play a central role in transcription regulation, DNA repair, DNA replication and chromosomal stability. DNA accessibility is regulated via a complex set of post-translational modifications of histones, also called histone code, and nucleosome remodeling. This is Histone H2B.6 (TH123) from Triticum aestivum (Wheat).